The following is a 297-amino-acid chain: 4-hydroxy-tetrahydrodipicolinate synthase (297 aa).

Thr49 lines the pyruvate pocket. The Proton donor/acceptor role is filled by Tyr137. The active-site Schiff-base intermediate with substrate is Lys166. Residue Ile208 coordinates pyruvate.

The protein belongs to the DapA family. As to quaternary structure, homotetramer; dimer of dimers.

Its subcellular location is the cytoplasm. The enzyme catalyses L-aspartate 4-semialdehyde + pyruvate = (2S,4S)-4-hydroxy-2,3,4,5-tetrahydrodipicolinate + H2O + H(+). Its pathway is amino-acid biosynthesis; L-lysine biosynthesis via DAP pathway; (S)-tetrahydrodipicolinate from L-aspartate: step 3/4. In terms of biological role, catalyzes the condensation of (S)-aspartate-beta-semialdehyde [(S)-ASA] and pyruvate to 4-hydroxy-tetrahydrodipicolinate (HTPA). In Parabacteroides distasonis (strain ATCC 8503 / DSM 20701 / CIP 104284 / JCM 5825 / NCTC 11152), this protein is 4-hydroxy-tetrahydrodipicolinate synthase.